The sequence spans 942 residues: DDB1- and CUL4-associated factor 5 (942 aa).

WD repeat units follow at residues 51–91 (GHFG…HSRV), 99–139 (EHHS…LDVF), 140–180 (AHED…HGEP), 185–225 (NYPS…SSLL), 277–317 (FNSC…EAGG), and 331–370 (GHRSIVNQVRFNPHTYMICSSGVEKIIKIWSPYKQPGCTG). Disordered regions lie at residues 449–478 (GVSERSGYTDSESSASLPRSPPPTVDESAD) and 490–509 (TTNTVASTPPTPTCEDAASR). The segment covering 454–465 (SGYTDSESSASL) has biased composition (polar residues). Thr500 carries the phosphothreonine modification. Ser531, Ser533, Ser626, Ser628, Ser645, Ser648, and Ser651 each carry phosphoserine. Disordered regions lie at residues 544–655 (TDLF…DIES), 676–824 (NNKD…EERS), and 889–942 (ACET…KLKT). Residues 625–641 (LSSSPTSSPERSTSTLE) show a composition bias toward low complexity. 2 stretches are compositionally biased toward basic and acidic residues: residues 690–701 (DEGRAGTSHKDN) and 728–738 (CSKDTFKEETP). Over residues 760–770 (GTSQDTGNSGS) the composition is skewed to polar residues. Ser794 carries the phosphoserine modification. The span at 801-815 (SGSTLNSGSGNCPRT) shows a compositional bias: polar residues.

Interacts with DDB1, CUL4A or CUL4B. Interacts with L3MBTL3. Interacts with DNMT1. Interacts with E2F1. Interacts with SOX2. As to expression, ubiquitous.

Its pathway is protein modification; protein ubiquitination. In terms of biological role, is a substrate receptor for the CUL4-DDB1 E3 ubiquitin-protein ligase complex (CRL4). The complex CRL4-DCAF5 is involved in the ubiquitination of a set of methylated non-histone proteins, including SOX2, DNMT1 and E2F1. The protein is DDB1- and CUL4-associated factor 5 (DCAF5) of Homo sapiens (Human).